The following is an 88-amino-acid chain: UPF0335 protein Mnod_5968 (88 aa).

It belongs to the UPF0335 family.

In Methylobacterium nodulans (strain LMG 21967 / CNCM I-2342 / ORS 2060), this protein is UPF0335 protein Mnod_5968.